A 268-amino-acid chain; its full sequence is Glutamate racemase (268 aa).

Substrate is bound by residues 14–15 (DS) and 46–47 (YG). C78 functions as the Proton donor/acceptor in the catalytic mechanism. 79 to 80 (NT) serves as a coordination point for substrate. C192 serves as the catalytic Proton donor/acceptor. A substrate-binding site is contributed by 193–194 (TH).

The protein belongs to the aspartate/glutamate racemases family.

The catalysed reaction is L-glutamate = D-glutamate. It participates in cell wall biogenesis; peptidoglycan biosynthesis. Its function is as follows. Provides the (R)-glutamate required for cell wall biosynthesis. The polypeptide is Glutamate racemase (Sphingopyxis alaskensis (strain DSM 13593 / LMG 18877 / RB2256) (Sphingomonas alaskensis)).